Reading from the N-terminus, the 327-residue chain is DNA-directed RNA polymerase subunit alpha (327 aa).

An alpha N-terminal domain (alpha-NTD) region spans residues Met1–Glu233. Residues Glu266–Lys327 are alpha C-terminal domain (alpha-CTD).

Belongs to the RNA polymerase alpha chain family. As to quaternary structure, in plastids the minimal PEP RNA polymerase catalytic core is composed of four subunits: alpha, beta, beta', and beta''. When a (nuclear-encoded) sigma factor is associated with the core the holoenzyme is formed, which can initiate transcription.

The protein resides in the plastid. It is found in the chloroplast. The enzyme catalyses RNA(n) + a ribonucleoside 5'-triphosphate = RNA(n+1) + diphosphate. Its function is as follows. DNA-dependent RNA polymerase catalyzes the transcription of DNA into RNA using the four ribonucleoside triphosphates as substrates. This Barbarea verna (Land cress) protein is DNA-directed RNA polymerase subunit alpha.